The chain runs to 483 residues: Protein FIZZY-RELATED 2 (483 aa).

A disordered region spans residues 1–28 (MEEEDPTASNVITNSNSSSMRNLSPAMN). Polar residues predominate over residues 7–28 (TASNVITNSNSSSMRNLSPAMN). WD repeat units follow at residues 174–211 (QDDFYLNLVDWSAQNVLAVGLGNCVYLWNACSSKVTKL), 215–254 (GAEDSVCSVGWALRGTHLAVGTSTGKVQIWDASRCKRTRT), 257–294 (GHRLRVGALAWGSSVLSSGSRDKSILQRDIRCQEDHVS), 298–337 (GHKSEVCGLKWSYDNRELASGGNDNRLFVWNQHSTQPVLK), 340–382 (EHTA…HLSS), 384–425 (DTCS…KIAT), and 428–467 (GHTYRVLYLAVSPDGQTIVTGAGDETLRFWNVFPSPKSQN).

This sequence belongs to the WD repeat CDC20/Fizzy family. In terms of assembly, associates with the APC/C complex. Interacts with CDC20-1, CDC20-2, CYCA1-1, CYCA1-2, CYCA3-4, CYCB1-1 and CYCB1-2. Binds to GIG1 and PYM. Expressed in seedlings, flowers, leaves and roots. Expressed in the differentiating cell files of the root elongation zone.

The protein resides in the nucleus. Its pathway is protein modification; protein ubiquitination. In terms of biological role, activator protein that regulates the ubiquitin ligase activity and substrate specificity of the anaphase promoting complex/cyclosome (APC/C). Necessary and sufficient for endoreduplication and correct cell expansion. Controls meristem size by stimulating endoreduplication in the elongation zone. In Arabidopsis thaliana (Mouse-ear cress), this protein is Protein FIZZY-RELATED 2 (FZR2).